The following is a 1334-amino-acid chain: Aldehyde oxidase 1 (1334 aa).

Residues 5-92 form the 2Fe-2S ferredoxin-type domain; it reads PELLFYVNGR…GAAVTTVEGI (88 aa). Positions 44, 49, 52, and 74 each coordinate [2Fe-2S] cluster. Mo-molybdopterin is bound at residue Gln-113. Positions 114, 117, 149, and 151 each coordinate [2Fe-2S] cluster. Cys-151 provides a ligand contact to Mo-molybdopterin. The FAD-binding PCMH-type domain occupies 236 to 421; the sequence is FSGERMMWIS…ASVHIPYSRK (186 aa). FAD is bound by residues 264–271, Ala-345, Ser-354, His-358, Asp-367, and Leu-411; that span reads VVMGNTSV. Residues 802–803 and Met-1043 each bind Mo-molybdopterin; that span reads AF. Position 1064 is a phosphoserine (Ser-1064). Mo-molybdopterin-binding positions include 1084-1087, Gln-1199, and Leu-1264; that span reads GSVV. Catalysis depends on Glu-1266, which acts as the Proton acceptor; for azaheterocycle hydroxylase activity.

It belongs to the xanthine dehydrogenase family. In terms of assembly, homodimer. It depends on [2Fe-2S] cluster as a cofactor. FAD is required as a cofactor. Mo-molybdopterin serves as cofactor. In terms of processing, the N-terminus is blocked. In terms of tissue distribution, very high expression in liver and lung. High expression in kidney, pancreas, brain stem and spinal cord. Moderate expression in heart, testis, eye, cerebral cortex and cerebellum. Low expression in stomach and muscle.

It localises to the cytoplasm. It catalyses the reaction an aldehyde + O2 + H2O = a carboxylate + H2O2 + H(+). It carries out the reaction retinal + O2 + H2O = retinoate + H2O2 + H(+). The catalysed reaction is all-trans-retinal + O2 + H2O = all-trans-retinoate + H2O2 + H(+). With respect to regulation, inhibited by hydralazine and menadione. Not inhibited by BOF-4272 or allopurinol, xanthine dehydrogenase potent inhibitors. In contrast to guinea pig, human and rat, isovanillin is not an inhibitor but a substrate for AOX1 in rabbit. Oxidase with broad substrate specificity, oxidizing aromatic azaheterocycles, such as N1-methylnicotinamide, N-methylphthalazinium and phthalazine, as well as aldehydes, such as benzaldehyde, retinal, pyridoxal, and vanillin. Plays a key role in the metabolism of xenobiotics and drugs containing aromatic azaheterocyclic substituents. Participates in the bioactivation of prodrugs such as famciclovir, catalyzing the oxidation step from 6-deoxypenciclovir to penciclovir, which is a potent antiviral agent. Is probably involved in the regulation of reactive oxygen species homeostasis. May be a prominent source of superoxide generation via the one-electron reduction of molecular oxygen. May also catalyze nitric oxide (NO) production via the reduction of nitrite to NO with NADH or aldehyde as electron donor. May play a role in adipogenesis. Cannot use hypoxanthine and all-trans-retinol as substrate. The chain is Aldehyde oxidase 1 from Oryctolagus cuniculus (Rabbit).